The following is a 662-amino-acid chain: UvrABC system protein B (662 aa).

One can recognise a Helicase ATP-binding domain in the interval 31–188 (DNIEGGEKAQ…NDLVDIQFER (158 aa)). 44–51 (GATGTGKT) is an ATP binding site. The Beta-hairpin signature appears at 97–120 (YYDYYQPEAYVPSSDTYIEKDSSV). Residues 435 to 601 (QIDDLLGEIN…TIKKEIRDLI (167 aa)) form the Helicase C-terminal domain. One can recognise a UVR domain in the interval 626–661 (KELVKKLEKQMQEAVEVLDFELAAQIRDMMLEVKAL).

Belongs to the UvrB family. Forms a heterotetramer with UvrA during the search for lesions. Interacts with UvrC in an incision complex.

It localises to the cytoplasm. In terms of biological role, the UvrABC repair system catalyzes the recognition and processing of DNA lesions. A damage recognition complex composed of 2 UvrA and 2 UvrB subunits scans DNA for abnormalities. Upon binding of the UvrA(2)B(2) complex to a putative damaged site, the DNA wraps around one UvrB monomer. DNA wrap is dependent on ATP binding by UvrB and probably causes local melting of the DNA helix, facilitating insertion of UvrB beta-hairpin between the DNA strands. Then UvrB probes one DNA strand for the presence of a lesion. If a lesion is found the UvrA subunits dissociate and the UvrB-DNA preincision complex is formed. This complex is subsequently bound by UvrC and the second UvrB is released. If no lesion is found, the DNA wraps around the other UvrB subunit that will check the other stand for damage. This Streptococcus pneumoniae serotype 2 (strain D39 / NCTC 7466) protein is UvrABC system protein B.